Consider the following 291-residue polypeptide: MASLKDMRVRIASTKATQKITKAMQMVAASKLRRAQMAAEAARPYAEKMDAVISNIAGAAAGSPGAPVLLAGTGKDQVHLLLVCTGERGLSGAFNSSIVRLARERAYALMNQGKTVKFFCVGRKGYEQLRRTFDKQIIENIELRSVRQLGFVNAEDIAQKVIARFNNGEFDVCTLFYSRFKSVISQIPTAQQLIPLVVEAPAAGSVATSYEYEPEEDEILSTLLPRNLAVQIFRALLENNASFYGAQMSAMDNATRNAGDMIRKQTLIYNRTRQAMITKELIEIISGAEAI.

This sequence belongs to the ATPase gamma chain family. As to quaternary structure, F-type ATPases have 2 components, CF(1) - the catalytic core - and CF(0) - the membrane proton channel. CF(1) has five subunits: alpha(3), beta(3), gamma(1), delta(1), epsilon(1). CF(0) has three main subunits: a, b and c.

It localises to the cell inner membrane. Functionally, produces ATP from ADP in the presence of a proton gradient across the membrane. The gamma chain is believed to be important in regulating ATPase activity and the flow of protons through the CF(0) complex. In Rhodopseudomonas palustris (strain BisB5), this protein is ATP synthase gamma chain.